The following is a 267-amino-acid chain: Phosphate import ATP-binding protein PstB 2 (267 aa).

Residues 21-262 (LSTKDLHVYY…AKLQSTSDYV (242 aa)) enclose the ABC transporter domain. Residue 53–60 (GPSGCGKS) participates in ATP binding.

It belongs to the ABC transporter superfamily. Phosphate importer (TC 3.A.1.7) family. In terms of assembly, the complex is composed of two ATP-binding proteins (PstB), two transmembrane proteins (PstC and PstA) and a solute-binding protein (PstS).

Its subcellular location is the cell membrane. It carries out the reaction phosphate(out) + ATP + H2O = ADP + 2 phosphate(in) + H(+). Part of the ABC transporter complex PstSACB involved in phosphate import. Responsible for energy coupling to the transport system. The protein is Phosphate import ATP-binding protein PstB 2 of Streptococcus mutans serotype c (strain ATCC 700610 / UA159).